Consider the following 732-residue polypeptide: Zinc-exporting P-type ATPase (732 aa).

The HMA domain occupies 29 to 96 (GRMRVRADWV…AIGGAKHVAA (68 aa)). 6 helical membrane-spanning segments follow: residues 105 to 123 (HSTE…GGAA), 146 to 164 (MVAT…RGAL), 172 to 186 (AGTD…IASL), 195 to 209 (LTVL…YLQD), 342 to 366 (VGEN…LVTG), and 372 to 390 (MTML…TPTA). Catalysis depends on Asp-423, which acts as the 4-aspartylphosphate intermediate. Mg(2+)-binding residues include Asp-423, Thr-425, and Asp-625. A run of 2 helical transmembrane segments spans residues 676–695 (AVDV…AAGL) and 705–724 (PVLA…ANSS).

It belongs to the cation transport ATPase (P-type) (TC 3.A.3) family. Type IB subfamily.

It is found in the cell membrane. It carries out the reaction Zn(2+)(in) + ATP + H2O = Zn(2+)(out) + ADP + phosphate + H(+). Its function is as follows. Zn(2+) efflux transporter which is involved in detoxification of zinc during infection. This chain is Zinc-exporting P-type ATPase, found in Mycobacterium marinum (strain ATCC BAA-535 / M).